The sequence spans 160 residues: Transcription elongation factor GreA (160 aa).

Positions 50–70 form a coiled coil; that stretch reads AAREQQSFNEGRIQELEAKLS.

It belongs to the GreA/GreB family.

Necessary for efficient RNA polymerase transcription elongation past template-encoded arresting sites. The arresting sites in DNA have the property of trapping a certain fraction of elongating RNA polymerases that pass through, resulting in locked ternary complexes. Cleavage of the nascent transcript by cleavage factors such as GreA or GreB allows the resumption of elongation from the new 3'terminus. GreA releases sequences of 2 to 3 nucleotides. This is Transcription elongation factor GreA from Legionella pneumophila (strain Paris).